A 51-amino-acid chain; its full sequence is Insulin (51 aa).

Cystine bridges form between C7–C37, C19–C50, and C36–C41.

This sequence belongs to the insulin family. In terms of assembly, heterodimer of a B chain and an A chain linked by two disulfide bonds.

The protein resides in the secreted. Its function is as follows. Insulin decreases blood glucose concentration. It increases cell permeability to monosaccharides, amino acids and fatty acids. It accelerates glycolysis, the pentose phosphate cycle, and glycogen synthesis in liver. In Anser anser anser (Western greylag goose), this protein is Insulin (INS).